The following is a 266-amino-acid chain: Regulatory protein RecX (266 aa).

This sequence belongs to the RecX family.

It localises to the cytoplasm. Modulates RecA activity. In Levilactobacillus brevis (strain ATCC 367 / BCRC 12310 / CIP 105137 / JCM 1170 / LMG 11437 / NCIMB 947 / NCTC 947) (Lactobacillus brevis), this protein is Regulatory protein RecX.